Reading from the N-terminus, the 215-residue chain is Fibroblast growth factor 10 (215 aa).

Positions 1–36 are cleaved as a signal peptide; it reads MWKWILTHCASAFPHLPGCCCCFLLLFLVSSVPVTC. The disordered stretch occupies residues 49–73; sequence TNSSSSSSSSSSSSSFSSPSSAGRH. N-linked (GlcNAc...) asparagine glycosylation is present at Asn-50. Low complexity predominate over residues 51–69; it reads SSSSSSSSSSSSSFSSPSS. Residue Asn-203 is glycosylated (N-linked (GlcNAc...) asparagine).

This sequence belongs to the heparin-binding growth factors family. As to quaternary structure, interacts with FGFR1 and FGFR2. Interacts with FGFBP1. Preferentially expressed in the lung in adults.

It localises to the secreted. Its function is as follows. Plays an important role in the regulation of embryonic development, cell proliferation and cell differentiation. Required for normal branching morphogenesis. May play a role in wound healing. This chain is Fibroblast growth factor 10 (Fgf10), found in Rattus norvegicus (Rat).